The sequence spans 589 residues: 5'-AMP-activated protein kinase catalytic subunit alpha-1 (589 aa).

The 253-residue stretch at 24 to 276 (FVIKETIGKG…VKRIVNHSWF (253 aa)) folds into the Protein kinase domain. Residues 30 to 38 (IGKGAFGAV) and lysine 53 each bind ATP. The active-site Proton acceptor is aspartate 147.

It belongs to the protein kinase superfamily. CAMK Ser/Thr protein kinase family. SNF1 subfamily.

The enzyme catalyses L-seryl-[protein] + ATP = O-phospho-L-seryl-[protein] + ADP + H(+). It carries out the reaction L-threonyl-[protein] + ATP = O-phospho-L-threonyl-[protein] + ADP + H(+). Probably does not act as a sensor that couples lifespan to information about energy levels and insulin-like signals. Together with aak-2, involved in the establishment of germline stem cell (GSC) quiescence during dauer development. Plays a role in the maintenance of glycogen stores which are necessary for resistance to hyperosmotic stress. In Caenorhabditis elegans, this protein is 5'-AMP-activated protein kinase catalytic subunit alpha-1 (aak-1).